The sequence spans 311 residues: Terpentetriene synthase (311 aa).

A DDXXD motif motif is present at residues 77 to 81; it reads DDRWD.

It belongs to the terpene synthase family. As to quaternary structure, homodimer. It depends on Mg(2+) as a cofactor.

It catalyses the reaction terpentedienyl diphosphate = terpentetriene + diphosphate. It participates in antibiotic biosynthesis. Involved in the production of the isoprenoid antibiotic terpentecin. Converts terpentedienol diphosphate (TDP) into terpentetriene (TTE). Can also accept geranylgeranyl diphosphate (GGDP) and farnesyl diphosphate (FDP) as substrates. The polypeptide is Terpentetriene synthase (cyc2) (Kitasatospora griseola (Streptomyces griseolosporeus)).